A 33-amino-acid polypeptide reads, in one-letter code: Protamine (33 aa).

A disordered region spans residues 1–33 (MPRRRRSSSRPVRRRRRPRVSRRRRRRGGRRRR).

In terms of tissue distribution, testis.

It is found in the nucleus. The protein resides in the chromosome. Its function is as follows. Protamines substitute for histones in the chromatin of sperm during the haploid phase of spermatogenesis. They compact sperm DNA into a highly condensed, stable and inactive complex. This is Protamine from Oncorhynchus keta (Chum salmon).